The sequence spans 349 residues: Alanine racemase (349 aa).

Lys35 (proton acceptor; specific for D-alanine) is an active-site residue. Residue Lys35 is modified to N6-(pyridoxal phosphate)lysine. Arg130 serves as a coordination point for substrate. Catalysis depends on Tyr244, which acts as the Proton acceptor; specific for L-alanine. A substrate-binding site is contributed by Met292.

This sequence belongs to the alanine racemase family. Pyridoxal 5'-phosphate serves as cofactor.

It carries out the reaction L-alanine = D-alanine. It participates in amino-acid biosynthesis; D-alanine biosynthesis; D-alanine from L-alanine: step 1/1. In terms of biological role, catalyzes the interconversion of L-alanine and D-alanine. May also act on other amino acids. This Cereibacter sphaeroides (strain ATCC 17025 / ATH 2.4.3) (Rhodobacter sphaeroides) protein is Alanine racemase (alr).